The following is a 103-amino-acid chain: Large ribosomal subunit protein bL21 (103 aa).

This sequence belongs to the bacterial ribosomal protein bL21 family. Part of the 50S ribosomal subunit. Contacts protein L20.

Its function is as follows. This protein binds to 23S rRNA in the presence of protein L20. The sequence is that of Large ribosomal subunit protein bL21 from Burkholderia ambifaria (strain MC40-6).